The following is a 439-amino-acid chain: Xylose isomerase (439 aa).

Catalysis depends on residues His-101 and Asp-104. The Mg(2+) site is built by Glu-232, Glu-268, His-271, Asp-296, Asp-307, Asp-309, and Asp-339.

The protein belongs to the xylose isomerase family. As to quaternary structure, homotetramer. Mg(2+) is required as a cofactor.

It is found in the cytoplasm. The catalysed reaction is alpha-D-xylose = alpha-D-xylulofuranose. The chain is Xylose isomerase from Actinobacillus pleuropneumoniae serotype 5b (strain L20).